Here is a 680-residue protein sequence, read N- to C-terminus: Forkhead box protein P4 (680 aa).

The span at 1 to 17 (MMVESASETIRSAPSGQ) shows a compositional bias: polar residues. The disordered stretch occupies residues 1 to 56 (MMVESASETIRSAPSGQNGVGSLSGQADGSSGGATGTTASGTGREVTTGADSNGEM). Serine 52 and serine 86 each carry phosphoserine. Residues lysine 175 and lysine 246 each participate in a glycyl lysine isopeptide (Lys-Gly) (interchain with G-Cter in SUMO2) cross-link. The tract at residues 262–306 (FAAPPKVSPPLSHHTLPNGQPTVLTSRRDSSSHEETPGSHPLYGH) is disordered. Over residues 276–286 (TLPNGQPTVLT) the composition is skewed to polar residues. The segment covering 287 to 298 (SRRDSSSHEETP) has biased composition (basic and acidic residues). A C2H2-type zinc finger spans residues 307–332 (GECKWPGCETLCEDLGQFIKHLNTEH). The leucine-zipper stretch occupies residues 349-370 (VQQLEIQLAKESERLQAMMAHL). A Glycyl lysine isopeptide (Lys-Gly) (interchain with G-Cter in SUMO2) cross-link involves residue lysine 378. The disordered stretch occupies residues 407 to 445 (GLVHPPTSAAAPVTPLRPPGLGSASLHGGGPARRRSSDK). The fork-head DNA-binding region spans 467-559 (RPPFTYASLI…KMTGSPTLVK (93 aa)). Residue serine 554 is modified to Phosphoserine. The interval 602 to 680 (PLSHDDVGAP…EEELPGEELS (79 aa)) is disordered. A compositionally biased stretch (polar residues) spans 617 to 635 (SNGSSSPPRLSPPQYSHQV). Residues 668 to 680 (RDLEEELPGEELS) are compositionally biased toward acidic residues.

As to quaternary structure, forms homodimers and heterodimers with FOXP1 and FOXP2. Dimerization is required for DNA-binding.

It is found in the nucleus. Functionally, transcriptional repressor that represses lung-specific expression. The chain is Forkhead box protein P4 (FOXP4) from Homo sapiens (Human).